The chain runs to 55 residues: uncharacterized protein (55 aa).

This is an uncharacterized protein from Tibrogargan virus (strain CS132) (TIBV).